The sequence spans 83 residues: Cytochrome b559 subunit alpha (83 aa).

A helical membrane pass occupies residues 21 to 35; the sequence is VIHSITIPSLFIAGW. Residue His23 participates in heme binding.

The protein belongs to the PsbE/PsbF family. In terms of assembly, heterodimer of an alpha subunit and a beta subunit. PSII is composed of 1 copy each of membrane proteins PsbA, PsbB, PsbC, PsbD, PsbE, PsbF, PsbH, PsbI, PsbJ, PsbK, PsbL, PsbM, PsbT, PsbX, PsbY, PsbZ, Psb30/Ycf12, at least 3 peripheral proteins of the oxygen-evolving complex and a large number of cofactors. It forms dimeric complexes. It depends on heme b as a cofactor.

It is found in the plastid. The protein localises to the chloroplast thylakoid membrane. In terms of biological role, this b-type cytochrome is tightly associated with the reaction center of photosystem II (PSII). PSII is a light-driven water:plastoquinone oxidoreductase that uses light energy to abstract electrons from H(2)O, generating O(2) and a proton gradient subsequently used for ATP formation. It consists of a core antenna complex that captures photons, and an electron transfer chain that converts photonic excitation into a charge separation. This Oenothera berteroana (Bertero's evening primrose) protein is Cytochrome b559 subunit alpha.